The following is a 216-amino-acid chain: Pyrrolidone-carboxylate peptidase (216 aa).

Active-site residues include E80, C143, and H168.

The protein belongs to the peptidase C15 family. In terms of assembly, homotetramer.

The protein resides in the cytoplasm. It catalyses the reaction Release of an N-terminal pyroglutamyl group from a polypeptide, the second amino acid generally not being Pro.. In terms of biological role, removes 5-oxoproline from various penultimate amino acid residues except L-proline. This chain is Pyrrolidone-carboxylate peptidase, found in Cupriavidus taiwanensis (strain DSM 17343 / BCRC 17206 / CCUG 44338 / CIP 107171 / LMG 19424 / R1) (Ralstonia taiwanensis (strain LMG 19424)).